The following is a 25-amino-acid chain: Caerin-1.19 (25 aa).

Leu-25 bears the Leucine amide mark.

Belongs to the frog skin active peptide (FSAP) family. Caerin subfamily. As to expression, expressed by the skin dorsal glands.

The protein resides in the secreted. Caerin-1.19 shows significant activity against Gram-positive organisms, but is less effective against Gram-negative organisms. The polypeptide is Caerin-1.19 (Ranoidea gracilenta (Dainty green tree frog)).